The following is a 327-amino-acid chain: tRNA-modifying protein YgfZ (327 aa).

Folate-binding residues include Trp-27 and Trp-189.

Belongs to the tRNA-modifying YgfZ family.

The protein localises to the cytoplasm. Folate-binding protein involved in regulating the level of ATP-DnaA and in the modification of some tRNAs. It is probably a key factor in regulatory networks that act via tRNA modification, such as initiation of chromosomal replication. This is tRNA-modifying protein YgfZ from Klebsiella pneumoniae (strain 342).